The sequence spans 196 residues: CASP-like protein 1D1 (196 aa).

A compositionally biased stretch (basic and acidic residues) spans 1-18 (MASTDKPDRESIKSEEAP). The disordered stretch occupies residues 1–22 (MASTDKPDRESIKSEEAPAAHP). The Cytoplasmic portion of the chain corresponds to 1-29 (MASTDKPDRESIKSEEAPAAHPRRSNYSS). Residues 30–50 (VHVALRFLLFAASVTAVVVMV) traverse the membrane as a helical segment. At 51–84 (TAKQTKIVPVPGLPISVPLEAKFSDSPAFLYFIS) the chain is on the extracellular side. A helical transmembrane segment spans residues 85–105 (ALSVAGLYGILTTLAAISIVL). Topologically, residues 106 to 112 (KPAYATR) are cytoplasmic. A helical transmembrane segment spans residues 113–133 (FLLHFALLDVLMLGIVASATG). Topologically, residues 134–167 (AAGGVAYVGLKGNSHVRWGKVCNVYDKFCQHVGS) are extracellular. The chain crosses the membrane as a helical span at residues 168 to 188 (SIAVALFASVLLVLLTMLSVF). The Cytoplasmic portion of the chain corresponds to 189–196 (SIYRKIPK).

The protein belongs to the Casparian strip membrane proteins (CASP) family. Homodimer and heterodimers.

The protein localises to the cell membrane. The protein is CASP-like protein 1D1 of Populus trichocarpa (Western balsam poplar).